A 328-amino-acid polypeptide reads, in one-letter code: Ferredoxin--NADP reductase 1 (328 aa).

The FAD site is built by Asp28, Gln36, Tyr41, Ala81, Ile116, Asp277, and Ser320.

This sequence belongs to the ferredoxin--NADP reductase type 2 family. Homodimer. FAD serves as cofactor.

It carries out the reaction 2 reduced [2Fe-2S]-[ferredoxin] + NADP(+) + H(+) = 2 oxidized [2Fe-2S]-[ferredoxin] + NADPH. The chain is Ferredoxin--NADP reductase 1 from Sulfolobus acidocaldarius (strain ATCC 33909 / DSM 639 / JCM 8929 / NBRC 15157 / NCIMB 11770).